A 151-amino-acid polypeptide reads, in one-letter code: MAGKETRLEKMLAPVVESLGCEFWGLELRMQGKQSLLRIFIEKEAGVGVEDCENVSRQVSAVLDVEDPISGEYTLEVSSPGMDRPLFTLDHFTRFVGEHVSLRLRTAFDGRRNFSGKLTAVEDDEVILLIDAEEYILPFELIDKAQVVPKF.

This sequence belongs to the RimP family.

It is found in the cytoplasm. Its function is as follows. Required for maturation of 30S ribosomal subunits. The chain is Ribosome maturation factor RimP from Saccharophagus degradans (strain 2-40 / ATCC 43961 / DSM 17024).